A 126-amino-acid polypeptide reads, in one-letter code: Phosphoribosyl-AMP cyclohydrolase (126 aa).

Aspartate 82 is a binding site for Mg(2+). Cysteine 83 serves as a coordination point for Zn(2+). Positions 84 and 86 each coordinate Mg(2+). Cysteine 99 and cysteine 106 together coordinate Zn(2+).

The protein belongs to the PRA-CH family. Homodimer. It depends on Mg(2+) as a cofactor. Zn(2+) is required as a cofactor.

It localises to the cytoplasm. It catalyses the reaction 1-(5-phospho-beta-D-ribosyl)-5'-AMP + H2O = 1-(5-phospho-beta-D-ribosyl)-5-[(5-phospho-beta-D-ribosylamino)methylideneamino]imidazole-4-carboxamide. The protein operates within amino-acid biosynthesis; L-histidine biosynthesis; L-histidine from 5-phospho-alpha-D-ribose 1-diphosphate: step 3/9. Functionally, catalyzes the hydrolysis of the adenine ring of phosphoribosyl-AMP. This Micrococcus luteus (strain ATCC 4698 / DSM 20030 / JCM 1464 / CCM 169 / CCUG 5858 / IAM 1056 / NBRC 3333 / NCIMB 9278 / NCTC 2665 / VKM Ac-2230) (Micrococcus lysodeikticus) protein is Phosphoribosyl-AMP cyclohydrolase.